Here is a 1036-residue protein sequence, read N- to C-terminus: Phytosulfokine receptor 2 (1036 aa).

The first 16 residues, 1 to 16 (MVIILLLVFFVGSSVS), serve as a signal peptide directing secretion. 2 N-linked (GlcNAc...) asparagine glycosylation sites follow: N36 and N45. 17 LRR repeats span residues 89 to 111 (ELRV…ISKL), 113 to 136 (QLQV…SGLK), 137 to 159 (LIQS…GVFP), 160 to 182 (GLVM…LCSS), 185 to 207 (GIQV…YNCS), 209 to 231 (SIQQ…LYSI), 233 to 256 (ELEQ…SNLS), 257 to 279 (GLKS…FGNL), 281 to 303 (QLEH…LSQC), 305 to 326 (KLRV…NFTG), 329 to 351 (DLCV…LGHC), 353 to 375 (KMKI…FKNL), 377 to 398 (SLLF…MNVL), 403 to 423 (NLST…NNVT), 427 to 450 (NLAI…LNCK), 451 to 473 (KLEV…IGKM), and 475 to 498 (SLFY…TELK). N-linked (GlcNAc...) asparagine glycans are attached at residues N142, N165, and N205. N-linked (GlcNAc...) asparagine glycosylation is found at N251, N254, and N278. N-linked (GlcNAc...) asparagine glycans are attached at residues N313 and N323. N-linked (GlcNAc...) asparagine glycosylation is found at N385, N403, and N421. N-linked (GlcNAc...) asparagine glycosylation is found at N483, N504, N523, N549, and N571. LRR repeat units follow at residues 561-583 (ELHM…ISGL) and 585-606 (NLEV…SFQS). The chain crosses the membrane as a helical span at residues 680 to 700 (IVVLTISLAIGITLLLSVILL). T751 is modified (phosphothreonine). In terms of domain architecture, Protein kinase spans 754 to 1025 (FSQANIIGCG…PLIEEVVTWL (272 aa)). ATP is bound by residues 760–768 (IGCGGFGLV) and K782. Phosphotyrosine occurs at positions 827 and 867. D880 (proton acceptor) is an active-site residue. The residue at position 922 (Y922) is a Phosphotyrosine. An LRR 20 repeat occupies 995–1020 (RTVLEMLEIACKCIDHEPRRRPLIEE).

It belongs to the protein kinase superfamily. Ser/Thr protein kinase family.

It localises to the cell membrane. It carries out the reaction L-seryl-[protein] + ATP = O-phospho-L-seryl-[protein] + ADP + H(+). The enzyme catalyses L-threonyl-[protein] + ATP = O-phospho-L-threonyl-[protein] + ADP + H(+). Its function is as follows. Phytosulfokine receptor with a serine/threonine-protein kinase activity. This Arabidopsis thaliana (Mouse-ear cress) protein is Phytosulfokine receptor 2 (PSKR2).